Here is a 203-residue protein sequence, read N- to C-terminus: RNA chaperone ProQ (203 aa).

The tract at residues 111 to 138 is disordered; sequence KAKRQALAPKKPAKKVAPKRAPAVKKER.

This sequence belongs to the ProQ family.

The protein resides in the cytoplasm. In terms of biological role, RNA chaperone with significant RNA binding, RNA strand exchange and RNA duplexing activities. This is RNA chaperone ProQ from Shewanella frigidimarina (strain NCIMB 400).